A 69-amino-acid polypeptide reads, in one-letter code: U2-agatoxin-Ao1g (69 aa).

Positions 1 to 20 are cleaved as a signal peptide; sequence MKAIISLLLISAMVFSMIEA. Positions 21–34 are excised as a propeptide; the sequence is VPVEEGLQLFEGER. 3 disulfide bridges follow: cysteine 36–cysteine 52, cysteine 43–cysteine 57, and cysteine 51–cysteine 67. Leucine 68 is subject to Leucine amide.

The protein belongs to the neurotoxin 01 (U2-agtx) family. As to expression, expressed by the venom gland.

It is found in the secreted. Functionally, insect active toxin causing rapid but reversible paralysis in crickets. No activity shown in mammals. Does not show effect on mammalian voltage-gated calcium channels. The chain is U2-agatoxin-Ao1g from Agelena orientalis (Funnel-web spider).